The primary structure comprises 785 residues: Protein PHTF2 (785 aa).

The PHTF domain occupies 46–191 (IQCLIGAYDQ…VHCQIVSTRT (146 aa)). 2 helical membrane passes run 136-156 (VIFF…VLFC) and 164-184 (IPLT…TVHC). 2 disordered regions span residues 190-239 (RTPK…GTST) and 304-401 (RPEE…PESE). Residues 200–209 (GKRRRKLRKA) are compositionally biased toward basic residues. Positions 210–219 (AHLEVHREGD) are enriched in basic and acidic residues. 2 stretches are compositionally biased toward polar residues: residues 220 to 239 (GSST…GTST) and 309 to 333 (AWNT…VSDE). Asparagine 329 carries N-linked (GlcNAc...) asparagine glycosylation. Basic residues predominate over residues 359-369 (RNRKSHHYKKH). The segment covering 378–390 (SGTSCSSRCSSSR) has biased composition (low complexity). A compositionally biased stretch (basic and acidic residues) spans 391–400 (QDSESARPES). Transmembrane regions (helical) follow at residues 497–517 (IGYQ…PFVF), 553–573 (VIIS…LLCV), 634–654 (VIVS…CAQL), and 668–688 (WELV…VTLG). 2 N-linked (GlcNAc...) asparagine glycosylation sites follow: asparagine 697 and asparagine 756. Residues 760 to 780 (VVILSAVSGVISDLLGFNLKL) form a helical membrane-spanning segment.

It is found in the membrane. This is Protein PHTF2 (PHTF2) from Homo sapiens (Human).